Consider the following 407-residue polypeptide: Probable cysteine protease atg4 (407 aa).

C136 acts as the Nucleophile in catalysis. Active-site residues include D310 and H312.

It belongs to the peptidase C54 family.

The protein localises to the cytoplasm. It localises to the nucleus. It is found in the preautophagosomal structure. It carries out the reaction [protein]-C-terminal L-amino acid-glycyl-phosphatidylethanolamide + H2O = [protein]-C-terminal L-amino acid-glycine + a 1,2-diacyl-sn-glycero-3-phosphoethanolamine. In terms of biological role, cysteine protease that is required for autophagy. Plays a key role in cytoplasm to vacuole transport (Cvt) and autophagy by mediating both proteolytic activation and delipidation of atg8. The protease activity is required for proteolytic activation of atg8 by the cleavage of the C-terminal amino acid of atg8 to reveal a C-terminal glycine. Azg8 ubiquitin-like activity requires the exposure of the glycine at the C-terminus for its conjugation to phosphatidylethanolamine (PE) and its insertion to membranes, which is necessary for autophagy. The atg8-PE conjugate mediates tethering between adjacent membranes and stimulates membrane hemifusion, leading to expansion of the autophagosomal membrane during autophagy. In addition to the protease activity, also catalyzes deconjugation of PE-conjugated forms of atg8 during macroautophagy since atg8 delipidation is required to release the protein from membranes, which facilitates multiple events during macroautophagy, and especially for efficient autophagosome biogenesis, the assembly of atg99-containing tubulovesicular clusters into phagophores/autophagosomes, and for the disassembly of PAS-associated ATG components. Atg8 delipidation by atg4 also recycles atg8-PE generated on inappropriate membranes to maintain a reservoir of unlipidated atg8 that is required for autophagosome formation at the PAS. This is Probable cysteine protease atg4 from Aspergillus oryzae (strain ATCC 42149 / RIB 40) (Yellow koji mold).